The chain runs to 323 residues: 1-aminocyclopropane-1-carboxylate oxidase 4 (323 aa).

Residue Met-1 is modified to N-acetylmethionine. Residues 153 to 254 (PTFGTKVSNY…RMSIASFYNP (102 aa)) form the Fe2OG dioxygenase domain. Fe cation contacts are provided by His-177, Asp-179, and His-234. Residue Arg-245 participates in 2-oxoglutarate binding.

This sequence belongs to the iron/ascorbate-dependent oxidoreductase family. It depends on Fe cation as a cofactor. Expressed in vegetative tissues. Expressed constitutively at a low level in leaves and blades.

It catalyses the reaction 1-aminocyclopropane-1-carboxylate + L-ascorbate + O2 = ethene + L-dehydroascorbate + hydrogen cyanide + CO2 + 2 H2O. It participates in alkene biosynthesis; ethylene biosynthesis via S-adenosyl-L-methionine; ethylene from S-adenosyl-L-methionine: step 2/2. Its function is as follows. Enzyme involved in the ethylene biosynthesis. May promote stem elongation by maximizing the extensibility cells, possibly by activating ethylene biosynthesis, in response to very-long-chain fatty acids (VLCFAs C20:0 to C30:0). This chain is 1-aminocyclopropane-1-carboxylate oxidase 4 (ACO4), found in Arabidopsis thaliana (Mouse-ear cress).